The following is a 358-amino-acid chain: 3-isopropylmalate dehydrogenase 2 (358 aa).

74 to 87 (GPKWDKLPAESRPE) is an NAD(+) binding site. Residues Arg-94, Arg-104, Arg-132, and Asp-221 each contribute to the substrate site. 3 residues coordinate Mg(2+): Asp-221, Asp-245, and Asp-249. Residue 279-291 (GSAPDIAGQGVAN) participates in NAD(+) binding.

The protein belongs to the isocitrate and isopropylmalate dehydrogenases family. LeuB type 1 subfamily. Homodimer. Mg(2+) is required as a cofactor. Mn(2+) serves as cofactor.

It localises to the cytoplasm. It catalyses the reaction (2R,3S)-3-isopropylmalate + NAD(+) = 4-methyl-2-oxopentanoate + CO2 + NADH. The protein operates within amino-acid biosynthesis; L-leucine biosynthesis; L-leucine from 3-methyl-2-oxobutanoate: step 3/4. Functionally, catalyzes the oxidation of 3-carboxy-2-hydroxy-4-methylpentanoate (3-isopropylmalate) to 3-carboxy-4-methyl-2-oxopentanoate. The product decarboxylates to 4-methyl-2 oxopentanoate. This is 3-isopropylmalate dehydrogenase 2 from Dechloromonas aromatica (strain RCB).